The sequence spans 132 residues: Fatty acid-binding protein 1 (132 aa).

Residues Arg-106 and 128 to 130 (RYY) contribute to the a fatty acid site.

The protein belongs to the calycin superfamily. Fatty-acid binding protein (FABP) family. Monomer. As to expression, midgut.

It localises to the cytoplasm. In terms of biological role, binds fatty acids in a 1:1 molar ratio. The chain is Fatty acid-binding protein 1 (MFB1) from Manduca sexta (Tobacco hawkmoth).